The chain runs to 498 residues: ADP,ATP carrier protein 1 (498 aa).

Topologically, residues 1 to 33 (MNNPKNDNYLSELSKVIWPIERYENKKFLPMAF) are cytoplasmic. The helical transmembrane segment at 34-54 (MMFCILLNYSTLRSIKDGFVV) threads the bilayer. C37 and C85 form a disulfide bridge. Over 55-67 (TDIGAEAISFLKT) the chain is Extracellular. A helical transmembrane segment spans residues 68-88 (YIVLPSAVIAMVIYVKLCDIL). Topologically, residues 89 to 92 (KQEN) are cytoplasmic. Residues 93–113 (VFYVITSFFLGYFALFAFVLY) form a helical membrane-spanning segment. Over 114–147 (PYPDLVHPDPETIESWSVAYPNVKWFIRIVGKWS) the chain is Extracellular. Residues 148–168 (FASFYTMAELWGTMMLSLLFW) traverse the membrane as a helical segment. Topologically, residues 169–184 (QFANQITKTDEAKRFY) are cytoplasmic. A helical transmembrane segment spans residues 185-205 (SMFGLLANLALPVTSVIIGYC). Residues 206–218 (LHEKTQIVAEHLK) are Extracellular-facing. The chain crosses the membrane as a helical span at residues 219 to 239 (FVPLFVIMITSSFLVILTYRW). The Cytoplasmic portion of the chain corresponds to 240–279 (MNKNVLTDPRLYDPALVKEKKAKAKMSLIDSFKMIFTSKY). The helical transmembrane segment at 280–300 (VGYIALLLIAYGVSVNLVEGV) threads the bilayer. The Extracellular portion of the chain corresponds to 301-320 (WKSKVKELYPTKEAYTIYMG). The helical transmembrane segment at 321-341 (KFQFYQGWVAIAFMLIGSNIL) threads the bilayer. Residues 342-348 (RKVSWLT) are Cytoplasmic-facing. The chain crosses the membrane as a helical span at residues 349–369 (AAMITPLMMLITGAAFFAFIF). The Extracellular segment spans residues 370-379 (FDSVIAMHLT). The chain crosses the membrane as a helical span at residues 380-400 (GILASGPLALAVMIGMIQNVL). The Cytoplasmic portion of the chain corresponds to 401–438 (SKGVKYSLFDATKNMAYIPLDKDLRVKGQAAVEVIGGR). 436-442 (GGRFGKS) is a binding site for ATP. Residues 439–459 (FGKSGGAIIQSTFFILFPAFG) traverse the membrane as a helical segment. At 460–465 (FVEATP) the chain is on the extracellular side. The helical transmembrane segment at 466–486 (YFASIFFVIVILWIYAVKGLN) threads the bilayer. Residues 487–498 (KEYKVLVNKTEK) lie on the Cytoplasmic side of the membrane.

It belongs to the ADP/ATP translocase tlc family.

The protein resides in the cell membrane. Its function is as follows. Provides the rickettsial cell with host ATP in exchange for rickettsial ADP. This is an obligate exchange system. This energy acquiring activity is an important component of rickettsial parasitism. The chain is ADP,ATP carrier protein 1 (tlcA) from Rickettsia conorii (strain ATCC VR-613 / Malish 7).